Consider the following 452-residue polypeptide: Cobyrinate a,c-diamide synthase (452 aa).

One can recognise a GATase cobBQ-type domain in the interval 246-439; it reads TLAYALDDAF…LHVHFYQDEQ (194 aa). Cys-328 (nucleophile) is an active-site residue.

Belongs to the CobB/CbiA family. It depends on Mg(2+) as a cofactor.

The catalysed reaction is cob(II)yrinate + 2 L-glutamine + 2 ATP + 2 H2O = cob(II)yrinate a,c diamide + 2 L-glutamate + 2 ADP + 2 phosphate + 2 H(+). Its pathway is cofactor biosynthesis; adenosylcobalamin biosynthesis; cob(II)yrinate a,c-diamide from sirohydrochlorin (anaerobic route): step 10/10. Catalyzes the ATP-dependent amidation of the two carboxylate groups at positions a and c of cobyrinate, using either L-glutamine or ammonia as the nitrogen source. The protein is Cobyrinate a,c-diamide synthase of Streptococcus sanguinis (strain SK36).